Reading from the N-terminus, the 424-residue chain is Lipoamide acyltransferase component of branched-chain alpha-keto acid dehydrogenase complex (424 aa).

Positions I3–E78 constitute a Lipoyl-binding domain. K44 is subject to N6-lipoyllysine. A disordered region spans residues A82 to K115. The region spanning R116–I153 is the Peripheral subunit-binding (PSBD) domain. The tract at residues E154–G193 is disordered. Active-site residues include H395 and D399.

This sequence belongs to the 2-oxoacid dehydrogenase family. As to quaternary structure, forms a 24-polypeptide structural core with octahedral symmetry. (R)-lipoate serves as cofactor.

The enzyme catalyses N(6)-[(R)-dihydrolipoyl]-L-lysyl-[protein] + 2-methylpropanoyl-CoA = N(6)-[(R)-S(8)-2-methylpropanoyldihydrolipoyl]-L-lysyl-[protein] + CoA. The branched-chain alpha-keto dehydrogenase complex catalyzes the overall conversion of alpha-keto acids to acyl-CoA and CO(2). It contains multiple copies of three enzymatic components: branched-chain alpha-keto acid decarboxylase (E1), lipoamide acyltransferase (E2) and lipoamide dehydrogenase (E3). This is Lipoamide acyltransferase component of branched-chain alpha-keto acid dehydrogenase complex (bfmBB) from Bacillus subtilis (strain 168).